The chain runs to 341 residues: MSGFIDEVPIQIRAGHGGAGSVHFHKEKFVEFGGPDGGDGGKGGDVIFLAEGRMMTLENYLPDRMYAAQDGEPGLGQNRNGKNGEDLILKVPVGTQIIDSVTMELIYDFNHDGESFTIATGGRGGKGNTFFKTSVQQAPRYSQPGEEGGAFSLILELKLLADIGIVGLPNAGKSTLLAKITHAHPKIAGYAFTTLSPNLGVVHRHEDLFRYTVADIPGIIEGASRGVGLGISFLKHIERVQGILFLFDGGNLQLEEELEMLRSELGNYNQTLLDKKFLLVINKMDIWDNDPSFTEEIQKKYSHLGEIICISADKEFNLEYLLERIDKVFFTEKVKLVYENT.

Positions 2–160 (SGFIDEVPIQ…FSLILELKLL (159 aa)) constitute an Obg domain. Residues 161-330 (ADIGIVGLPN…LLERIDKVFF (170 aa)) form the OBG-type G domain. GTP contacts are provided by residues 167–174 (GLPNAGKS), 192–196 (FTTLS), 215–218 (DIPG), 282–285 (NKMD), and 311–313 (SAD). Mg(2+)-binding residues include Ser174 and Thr194.

The protein belongs to the TRAFAC class OBG-HflX-like GTPase superfamily. OBG GTPase family. In terms of assembly, monomer. Requires Mg(2+) as cofactor.

It is found in the cytoplasm. Functionally, an essential GTPase which binds GTP, GDP and possibly (p)ppGpp with moderate affinity, with high nucleotide exchange rates and a fairly low GTP hydrolysis rate. Plays a role in control of the cell cycle, stress response, ribosome biogenesis and in those bacteria that undergo differentiation, in morphogenesis control. In Leptospira biflexa serovar Patoc (strain Patoc 1 / Ames), this protein is GTPase Obg.